Reading from the N-terminus, the 160-residue chain is MDSPRGISTATGDAHAEAAVSPAAEIQIKTEAPDVDGPEATTECLDHTYTQQTSGGDGLDAIDTDDLLEMVLTSENTESEPGIPFALRGNFICCRDDNCRACRELPFRPSVIGFSRDPHVSMALDMTSGNWAYVPRVFPDTPTAPWMANYCIPDLDEHAD.

The span at 1–11 shows a compositional bias: polar residues; it reads MDSPRGISTAT. The tract at residues 1–26 is disordered; that stretch reads MDSPRGISTATGDAHAEAAVSPAAEI.

The polypeptide is Gene 34 protein (Equus caballus (Horse)).